The chain runs to 315 residues: ATP synthase gamma chain (315 aa).

This sequence belongs to the ATPase gamma chain family. F-type ATPases have 2 components, CF(1) - the catalytic core - and CF(0) - the membrane proton channel. CF(1) has five subunits: alpha(3), beta(3), gamma(1), delta(1), epsilon(1). CF(0) has three main subunits: a, b and c.

The protein resides in the cell membrane. Functionally, produces ATP from ADP in the presence of a proton gradient across the membrane. The gamma chain is believed to be important in regulating ATPase activity and the flow of protons through the CF(0) complex. The polypeptide is ATP synthase gamma chain (Latilactobacillus sakei subsp. sakei (strain 23K) (Lactobacillus sakei subsp. sakei)).